Here is a 221-residue protein sequence, read N- to C-terminus: Putative hemin import ATP-binding protein HrtA (221 aa).

The region spanning 3-221 (LVVKDIVKNF…IELEDGKITD (219 aa)) is the ABC transporter domain. 39-46 (GASGSGKT) lines the ATP pocket.

Belongs to the ABC transporter superfamily. HrtA family. As to quaternary structure, the complex is composed of two ATP-binding proteins (HrtA), two transmembrane proteins (HrtB) and a solute-binding protein.

The protein localises to the cell membrane. Part of the ABC transporter complex hrt involved in hemin import. Responsible for energy coupling to the transport system. The sequence is that of Putative hemin import ATP-binding protein HrtA (hrtA) from Staphylococcus aureus (strain MRSA252).